We begin with the raw amino-acid sequence, 421 residues long: E3 ubiquitin-protein ligase MARCHF4 (421 aa).

The first 16 residues, 1-16 (MLLAIGVIVWCWGLLS), serve as a signal peptide directing secretion. Residues 60–79 (ELNAEGNATSSATESHSLAN) form a disordered region. The segment covering 65-77 (GNATSSATESHSL) has biased composition (polar residues). The RING-CH-type zinc finger occupies 135 to 195 (DSGVRTPLCR…ELCYYKYQVI (61 aa)). Zn(2+) contacts are provided by Cys143, Cys146, Cys159, Cys161, His169, Cys172, Cys185, and Cys188. 2 consecutive transmembrane segments (helical) span residues 218–238 (IAAA…LVWS) and 252–272 (LFQI…ALIV). Disordered stretches follow at residues 319-385 (PLTH…LPDH) and 401-421 (QEPR…VTTV). Composition is skewed to polar residues over residues 367 to 380 (TEPQ…NGQP) and 403 to 412 (PRGQTSNSNR).

The protein resides in the golgi apparatus membrane. The catalysed reaction is S-ubiquitinyl-[E2 ubiquitin-conjugating enzyme]-L-cysteine + [acceptor protein]-L-lysine = [E2 ubiquitin-conjugating enzyme]-L-cysteine + N(6)-ubiquitinyl-[acceptor protein]-L-lysine.. The protein operates within protein modification; protein ubiquitination. Functionally, E3 ubiquitin-protein ligase. E3 ubiquitin ligases accept ubiquitin from an E2 ubiquitin-conjugating enzyme in the form of a thioester and then directly transfer the ubiquitin to targeted substrates. This is E3 ubiquitin-protein ligase MARCHF4 (marchf4) from Danio rerio (Zebrafish).